The primary structure comprises 315 residues: UDP-3-O-acyl-N-acetylglucosamine deacetylase (315 aa).

Zn(2+) is bound by residues histidine 78, histidine 235, and aspartate 239. Histidine 262 functions as the Proton donor in the catalytic mechanism.

The protein belongs to the LpxC family. It depends on Zn(2+) as a cofactor.

It carries out the reaction a UDP-3-O-[(3R)-3-hydroxyacyl]-N-acetyl-alpha-D-glucosamine + H2O = a UDP-3-O-[(3R)-3-hydroxyacyl]-alpha-D-glucosamine + acetate. It participates in glycolipid biosynthesis; lipid IV(A) biosynthesis; lipid IV(A) from (3R)-3-hydroxytetradecanoyl-[acyl-carrier-protein] and UDP-N-acetyl-alpha-D-glucosamine: step 2/6. Its function is as follows. Catalyzes the hydrolysis of UDP-3-O-myristoyl-N-acetylglucosamine to form UDP-3-O-myristoylglucosamine and acetate, the committed step in lipid A biosynthesis. The sequence is that of UDP-3-O-acyl-N-acetylglucosamine deacetylase from Syntrophus aciditrophicus (strain SB).